The following is a 338-amino-acid chain: Nucleoid-associated protein VSAL_I1059 (338 aa).

Positions 319-338 are disordered; the sequence is KGTPPNLKDQLTRRLGSSES.

The protein belongs to the YejK family.

Its subcellular location is the cytoplasm. It is found in the nucleoid. The chain is Nucleoid-associated protein VSAL_I1059 from Aliivibrio salmonicida (strain LFI1238) (Vibrio salmonicida (strain LFI1238)).